Consider the following 546-residue polypeptide: Coatomer subunit delta (546 aa).

The interval 190–440 (NRFMGSKDPN…VIFTIPVFPQ (251 aa)) is interaction with DSL1. Residues 236-287 (PMATSQRAGHSATGGMKLGGGAGRRAGAAPRPSAISSASSGTPPPPEEDVPE) form a disordered region. A compositionally biased stretch (low complexity) spans 260 to 276 (RAGAAPRPSAISSASSG). Residue Thr277 is modified to Phosphothreonine. The MHD domain maps to 288–546 (NNGILISIKE…SLKSDEYLVQ (259 aa)).

This sequence belongs to the adaptor complexes medium subunit family. Delta-COP subfamily. As to quaternary structure, oligomeric complex that consists of at least the alpha, beta, beta', gamma, delta, epsilon and zeta subunits. Interacts with DSL1.

It is found in the cytoplasm. It localises to the golgi apparatus membrane. Its subcellular location is the cytoplasmic vesicle. The protein localises to the COPI-coated vesicle membrane. The coatomer is a cytosolic protein complex that binds to dilysine motifs and reversibly associates with Golgi non-clathrin-coated vesicles, which further mediate biosynthetic protein transport from the ER, via the Golgi up to the trans Golgi network. Coatomer complex is required for budding from Golgi membranes, and is essential for the retrograde Golgi-to-ER transport of dilysine-tagged proteins. The polypeptide is Coatomer subunit delta (RET2) (Saccharomyces cerevisiae (strain ATCC 204508 / S288c) (Baker's yeast)).